The following is a 510-amino-acid chain: Inner membrane protein YeeR (510 aa).

Met1 is a topological domain (cytoplasmic). A helical membrane pass occupies residues 2-22; that stretch reads LQIVGALILLIAGFAILRLLF. Residues 23–30 are Periplasmic-facing; it reads RALISTAS. A helical membrane pass occupies residues 31 to 51; that stretch reads ALAGLILLCLFGPALLAGYIT. Over 52-61 the chain is Cytoplasmic; sequence ERITRLFHIR. Residues 62–82 traverse the membrane as a helical segment; sequence WLAGVFLTIAGMIISFMWGLD. Over 83-94 the chain is Periplasmic; sequence GKHIALEAHTFD. A helical transmembrane segment spans residues 95-115; sequence SVKFILTTALAGGLLAVPLQI. Residues 116–136 lie on the Cytoplasmic side of the membrane; sequence KNIQQNGITPEDISKEINGYY. The helical transmembrane segment at 137–157 threads the bilayer; sequence CCFYTAFFLMACSACAPLIAL. Residues 158–164 are Periplasmic-facing; that stretch reads QYDISPS. The helical transmembrane segment at 165–185 threads the bilayer; the sequence is LMWWGGLLYWLAALVTLLWAA. The Cytoplasmic segment spans residues 186–510; it reads SQIQALKKLT…KIREGKVEER (325 aa).

It localises to the cell inner membrane. This is Inner membrane protein YeeR (yeeR) from Escherichia coli (strain K12).